The chain runs to 907 residues: MLEKNYDAASIEQKIAKRWEARGAFKAGMGAKSGTEPFCVMLPPPNVTGSLHMGHALNTTIQDIVVRFERMRGKNVLWQPGMDHAGIATQTVVERQLAECQEPTRQEMGRERFVERIWEWRHETGGVIANQLRRLGVSCDWSRERFTMDEGLSHAVREVFVTLYKQGLIYKDKRLVNWDPKLLTAISDLEVEQREIKGHLWHFRYPLEGKVFDPGDPTTFITVATTRPETMLGDTGIAVNPEDDRYKNLIGQSALLPLVGRRLLIVADGYADPSEGSGAVKITPAHDFNDFEVGKRNNLRLINVFTQKAEIFLHKNEAFFDGLTLSDELKKLVENLDQADRFIARHQIVSLMEEGGYLAAVDDHPHTVPHGDRSGVPIEPFLTDQWYVCAEQLAKPAVEAVRQGRTQFVPDSWKKTYFNWMENIQPWCISRQLWWGHQIPAWYGPDGMVFVEKSEEEALAAAFSHYGEEVELTRDQDVLDTWFSSALWPFSTLGWPNKTTELDTFYPTSLSVTGFDIIFFWVARMMMMGLHFMGEVPFPTVYVHALVRDQKGAKMSKSKGNIIDPLELIDQYSADSLRFTLAVMAAQGRDVKLDPSRIAGYRNFATKLWNATRFAKINGVKHNPAFKPEKVKLALNRWILTELSKTVSAVTTGIENYKFNESADALYRFIWNTLCDWYLELLKPVFQSFNEEAKNEAQACTAWVLDEVYKLLHPFMPHMTEELWCLTETPNMQRKDMLALAQWPEITFLDEAAAADINWLIDVITEIRSVRFEMNIPAGKLAPLVIVEAGEITRERIQRYGALLKKLARIETIDFSDRVLAVSAQMVLGEAIFCLPLGQLIDLEAERARLVKNVSKIEQDIEKISVKLNNPKFVENAKPEIVEAERNKILELRVAQKKISIALERLV.

The 'HIGH' region motif lies at 45–55 (PNVTGSLHMGH). Residues 554-558 (KMSKS) carry the 'KMSKS' region motif. Residue Lys557 coordinates ATP. Positions 838–870 (GQLIDLEAERARLVKNVSKIEQDIEKISVKLNN) form a coiled coil.

The protein belongs to the class-I aminoacyl-tRNA synthetase family. ValS type 1 subfamily. As to quaternary structure, monomer.

Its subcellular location is the cytoplasm. It carries out the reaction tRNA(Val) + L-valine + ATP = L-valyl-tRNA(Val) + AMP + diphosphate. Functionally, catalyzes the attachment of valine to tRNA(Val). As ValRS can inadvertently accommodate and process structurally similar amino acids such as threonine, to avoid such errors, it has a 'posttransfer' editing activity that hydrolyzes mischarged Thr-tRNA(Val) in a tRNA-dependent manner. This Bartonella quintana (strain Toulouse) (Rochalimaea quintana) protein is Valine--tRNA ligase.